Reading from the N-terminus, the 1503-residue chain is Lysine-specific demethylase 5B-B (1503 aa).

Residues 15 to 56 form the JmjN domain; the sequence is CPVFEPSWEEFKDPFAFINKIRPIAEKTGICKVRPPPDWQPP. Residues 80–170 form the ARID domain; sequence TRVKLNFLDQ…ILYPYNLFQS (91 aa). Polar residues predominate over residues 202 to 211; sequence VPLQPSNTSA. Disordered stretches follow at residues 202–223 and 268–287; these read VPLQPSNTSAPARRAKRMKTES and IKELNPEPEKSKPKKKNIPP. The span at 268 to 278 shows a compositional bias: basic and acidic residues; the sequence is IKELNPEPEKS. The segment at 295 to 345 adopts a PHD-type 1 zinc-finger fold; it reads LYVCLVCGKGNDEDRLLLCDGCDDSYHTFCLIPPLTDVPKGDWRCPKCLTQ. In terms of domain architecture, JmjC spans 439-605; that stretch reads KYLQCGWNLN…LGRQCVDHYR (167 aa). Fe cation-binding residues include H485, D488, and H573. A PHD-type 2 zinc finger spans residues 1168–1216; it reads LKVCVCQKPAMGAMLQCELCRDAFHSVCVRGPSDPLDPEAWLCPLCLRS. Disordered regions lie at residues 1362–1381 and 1403–1442; these read TNTSHAEHKSYLTPPQTETD and ERGTKLKSKKQRMMGVEKRRERKAASVSASDMSQSEDSEE. A PHD-type 3 zinc finger spans residues 1444-1497; it reads MTLCPAESCLQPEGEEVDWVQCDCCNRWFHMICVGVSAELAAEEDYMCVSCSTS.

Belongs to the JARID1 histone demethylase family. The cofactor is Fe(2+).

The protein localises to the nucleus. The catalysed reaction is N(6),N(6),N(6)-trimethyl-L-lysyl(4)-[histone H3] + 3 2-oxoglutarate + 3 O2 = L-lysyl(4)-[histone H3] + 3 formaldehyde + 3 succinate + 3 CO2. In terms of biological role, histone demethylase that demethylates 'Lys-4' of histone H3, thereby playing a central role in histone code. Does not demethylate histone H3 'Lys-9' or H3 'Lys-27'. Demethylates trimethylated, dimethylated and monomethylated H3 'Lys-4'. Acts as a transcriptional corepressor. This is Lysine-specific demethylase 5B-B (kdm5bb) from Danio rerio (Zebrafish).